A 429-amino-acid chain; its full sequence is Methylenetetrahydrofolate--tRNA-(uracil-5-)-methyltransferase TrmFO (429 aa).

FAD is bound at residue 7–12; it reads GAGLAG.

Belongs to the MnmG family. TrmFO subfamily. Requires FAD as cofactor.

The protein resides in the cytoplasm. The catalysed reaction is uridine(54) in tRNA + (6R)-5,10-methylene-5,6,7,8-tetrahydrofolate + NADH + H(+) = 5-methyluridine(54) in tRNA + (6S)-5,6,7,8-tetrahydrofolate + NAD(+). The enzyme catalyses uridine(54) in tRNA + (6R)-5,10-methylene-5,6,7,8-tetrahydrofolate + NADPH + H(+) = 5-methyluridine(54) in tRNA + (6S)-5,6,7,8-tetrahydrofolate + NADP(+). Catalyzes the folate-dependent formation of 5-methyl-uridine at position 54 (M-5-U54) in all tRNAs. The protein is Methylenetetrahydrofolate--tRNA-(uracil-5-)-methyltransferase TrmFO of Thermosipho melanesiensis (strain DSM 12029 / CIP 104789 / BI429).